Here is a 1425-residue protein sequence, read N- to C-terminus: Ferlin 1 (1425 aa).

3 C2 domains span residues 1 to 123, 161 to 281, and 506 to 629; these read MAAK…RQWV, VNEG…PRWF, and TKAG…PVWL. The segment at 871–952 is disordered; it reads RPQASRLSRE…ALAASPEEET (82 aa). Basic and acidic residues-rich tracts occupy residues 877–889 and 912–926; these read LSREGTSRDERGK and ETEKKGDPVAEKKEG. 2 C2 domains span residues 1032 to 1160 and 1192 to 1319; these read EMDA…EQMV and RADY…QQHY. A helical transmembrane segment spans residues 1404–1424; the sequence is TGVWMTVAGIIALVIFVMFLL.

This sequence belongs to the ferlin family.

Its subcellular location is the golgi apparatus. The protein resides in the trans-Golgi network membrane. The protein localises to the endosome membrane. It is found in the cytoplasm. In terms of biological role, plays a role in microneme replenishment, probably at the vesicular trafficking level. Directs microneme organelle traffic differentially based on microneme population. Regulates microneme secretion: facilitates microneme membrane fusion with the plasma membrane. This Toxoplasma gondii protein is Ferlin 1.